A 329-amino-acid polypeptide reads, in one-letter code: Phytochromobilin:ferredoxin oxidoreductase, chloroplastic (329 aa).

A chloroplast-targeting transit peptide spans 1–45 (MALSMEFGFSIGSCFKAPNPPVLISASPNKINFTLRRRKKRFLLR).

Belongs to the HY2 family.

It is found in the plastid. It localises to the chloroplast. The catalysed reaction is (3Z)-phytochromobilin + 2 oxidized [2Fe-2S]-[ferredoxin] = biliverdin IXalpha + 2 reduced [2Fe-2S]-[ferredoxin] + 2 H(+). In terms of biological role, catalyzes the two-electron reduction of biliverdin IX-alpha to the tetrapyrrole chromophore phytochromobilin (PPhiB). This chain is Phytochromobilin:ferredoxin oxidoreductase, chloroplastic, found in Arabidopsis thaliana (Mouse-ear cress).